The chain runs to 78 residues: Defensin-like protein (78 aa).

The first 31 residues, 1 to 31 (MGRSIRLFATFFLIAMLFLSTEMGPMTSAEA), serve as a signal peptide directing secretion. 4 cysteine pairs are disulfide-bonded: cysteine 34–cysteine 78, cysteine 45–cysteine 65, cysteine 51–cysteine 72, and cysteine 55–cysteine 74.

This sequence belongs to the DEFL family. As to expression, predominantly expressed in the pistil during all stages of flower development.

It localises to the secreted. May be involved in the defense of the pistil against pathogen infection. This is Defensin-like protein from Petunia integrifolia (Violet-flowered petunia).